We begin with the raw amino-acid sequence, 315 residues long: L-threo-3-deoxy-hexylosonate aldolase (315 aa).

A substrate-binding site is contributed by 50-51 (SN). Lysine 174 serves as the catalytic Schiff-base intermediate with substrate.

This sequence belongs to the DapA family.

The enzyme catalyses 2-dehydro-3-deoxy-L-galactonate = L-glyceraldehyde + pyruvate. The protein operates within carbohydrate acid metabolism. In terms of biological role, mediates the conversion of 2-dehydro-3-deoxy-L-galactonate to pyruvate and L-glyceraldehyde in D-galacturonate catabolic process. The polypeptide is L-threo-3-deoxy-hexylosonate aldolase (lga1) (Hypocrea jecorina (Trichoderma reesei)).